The primary structure comprises 409 residues: Broad specificity amino-acid racemase (409 aa).

Positions Met1–Ala24 are cleaved as a signal peptide. An intrachain disulfide couples Cys71 to Cys97. Lys75 functions as the Proton acceptor in the catalytic mechanism. Lys75 bears the N6-(pyridoxal phosphate)lysine mark. Residue Arg174 participates in substrate binding. The active-site Proton acceptor is Tyr301. Met349 contacts substrate.

It belongs to the alanine racemase family. Bsr subfamily. In terms of assembly, monomer. Forms a head-to-tail homodimer in the structure. It depends on pyridoxal 5'-phosphate as a cofactor.

It is found in the periplasm. It carries out the reaction an L-alpha-amino acid = a D-alpha-amino acid. The enzyme catalyses L-lysine = D-lysine. The catalysed reaction is L-arginine = D-arginine. It catalyses the reaction L-alanine = D-alanine. Its activity is regulated as follows. Activity is enhanced by Co(2+), Mn(2+) and Sr(2+), and decreased by Cu(2+). In terms of biological role, amino-acid racemase that catalyzes the interconversion of L-lysine and D-lysine, and L-arginine and D-arginine. To a lesser extent, is also able to interconvert alanine and isoleucine enantiomers. The sequence is that of Broad specificity amino-acid racemase from Pseudomonas putida (Arthrobacter siderocapsulatus).